A 53-amino-acid polypeptide reads, in one-letter code: uncharacterized protein (53 aa).

This is an uncharacterized protein from Saccharomyces cerevisiae (strain ATCC 204508 / S288c) (Baker's yeast).